The following is a 159-amino-acid chain: S-ribosylhomocysteine lyase (159 aa).

Fe cation is bound by residues His-53, His-57, and Cys-124.

This sequence belongs to the LuxS family. As to quaternary structure, homodimer. Requires Fe cation as cofactor.

It carries out the reaction S-(5-deoxy-D-ribos-5-yl)-L-homocysteine = (S)-4,5-dihydroxypentane-2,3-dione + L-homocysteine. In terms of biological role, involved in the synthesis of autoinducer 2 (AI-2) which is secreted by bacteria and is used to communicate both the cell density and the metabolic potential of the environment. The regulation of gene expression in response to changes in cell density is called quorum sensing. Catalyzes the transformation of S-ribosylhomocysteine (RHC) to homocysteine (HC) and 4,5-dihydroxy-2,3-pentadione (DPD). This chain is S-ribosylhomocysteine lyase, found in Porphyromonas gingivalis (strain ATCC BAA-308 / W83).